The chain runs to 90 residues: Small ribosomal subunit protein bS20 (90 aa).

Residues 1-10 show a composition bias toward polar residues; it reads MANHKSTQKS. Residues 1–25 are disordered; that stretch reads MANHKSTQKSIRQDQKRNLINKSRK.

This sequence belongs to the bacterial ribosomal protein bS20 family.

Functionally, binds directly to 16S ribosomal RNA. This Orientia tsutsugamushi (strain Ikeda) (Rickettsia tsutsugamushi) protein is Small ribosomal subunit protein bS20.